An 89-amino-acid polypeptide reads, in one-letter code: Small ribosomal subunit protein uS17 (89 aa).

The protein belongs to the universal ribosomal protein uS17 family. As to quaternary structure, part of the 30S ribosomal subunit.

In terms of biological role, one of the primary rRNA binding proteins, it binds specifically to the 5'-end of 16S ribosomal RNA. The polypeptide is Small ribosomal subunit protein uS17 (Bdellovibrio bacteriovorus (strain ATCC 15356 / DSM 50701 / NCIMB 9529 / HD100)).